We begin with the raw amino-acid sequence, 604 residues long: Transcriptional repressor rco-1 (604 aa).

2 disordered regions span residues 87–110 (RGGA…PAIG) and 124–264 (GGQA…DRLP). Positions 144–163 (MPAPPGLQGPPPPPPPPSQQ) are enriched in pro residues. Low complexity-rich tracts occupy residues 164-177 (PPFQ…QGPG) and 190-209 (PGPA…PATP). A compositionally biased stretch (polar residues) spans 210–229 (QINTPIPYNGGPAQSPQVPT). 7 WD repeats span residues 295–324 (QHES…QIYD), 342–372 (TGDL…RVWD), 384–414 (GHEQ…RLWD), 425–455 (SIED…RVWD), 469–499 (GHKD…KMWE), 523–553 (GHRD…QFWD), and 565–600 (GHKN…RIWS).

Its function is as follows. Represses transcription by RNA polymerase II. May be involved at several stages of conidiation and other growth and development processes. Appears to regulate genes that are expressed in asexual and sexual spore pathways. In Neurospora crassa (strain ATCC 24698 / 74-OR23-1A / CBS 708.71 / DSM 1257 / FGSC 987), this protein is Transcriptional repressor rco-1 (rco-1).